Here is a 700-residue protein sequence, read N- to C-terminus: Lutropin-choriogonadotropic hormone receptor (700 aa).

The signal sequence occupies residues 1 to 26; it reads MGRRVPALRQLLVLAMLVLKQSQLHS. At 27–362 the chain is on the extracellular side; the sequence is PELSGSRCPE…AFNPCEDIMG (336 aa). An LRR 1 repeat occupies 52-75; that stretch reads RAGLARLSLTYLPVKVIPSQAFRG. Asn-103 carries N-linked (GlcNAc...) asparagine glycosylation. LRR repeat units lie at residues 126–150, 176–200, and 225–248; these read LPRLKYLSICNTGIRTLPDVSKISS, MNNESITLKLYGNGFEEVQSHAFNG, and ATGPSILDVSSTKLQALPSHGLES. N-linked (GlcNAc...) asparagine glycans are attached at residues Asn-178 and Asn-199. N-linked (GlcNAc...) asparagine glycans are attached at residues Asn-295, Asn-303, and Asn-317. Tyr-335 carries the post-translational modification Sulfotyrosine. Residues 363–390 form a helical membrane-spanning segment; the sequence is YAFLRVLIWLINILAIFGNLTVLFVLLT. The Cytoplasmic segment spans residues 391–399; it reads SRYKLTVPR. A helical transmembrane segment spans residues 400-422; it reads FLMCNLSFADFCMGLYLLLIASV. At 423–443 the chain is on the extracellular side; that stretch reads DSQTKGQYYNHAIDWQTGSGC. Cys-443 and Cys-518 are disulfide-bonded. A helical membrane pass occupies residues 444 to 466; that stretch reads SAAGFFTVFASELSVYTLTVITL. The Cytoplasmic portion of the chain corresponds to 467-486; it reads ERWHTITYAVQLDQKLRLRH. The helical transmembrane segment at 487-509 threads the bilayer; it reads AIPIMLGGWIFSTLMATLPLVGV. Residues 510 to 529 lie on the Extracellular side of the membrane; sequence SSYMKVSICLPMDVESTLSQ. Residues 530–551 form a helical membrane-spanning segment; that stretch reads VYILSILLLNAVAFVVICACYV. The Cytoplasmic segment spans residues 552-574; the sequence is RIYFAVQNPELTAPNKDTKIAKK. A helical membrane pass occupies residues 575 to 598; it reads MAILIFTDFTCMAPISFFAISAAF. Topologically, residues 599–609 are extracellular; the sequence is KVPLITVTNSK. The chain crosses the membrane as a helical span at residues 610–631; that stretch reads VLLVLFYPVNSCANPFLYAVFT. At 632-700 the chain is on the cytoplasmic side; sequence KAFQRDFFLL…QPTPPRVLIQ (69 aa). S-palmitoyl cysteine attachment occurs at residues Cys-647 and Cys-648.

The protein belongs to the G-protein coupled receptor 1 family. FSH/LSH/TSH subfamily. Post-translationally, sulfated.

The protein resides in the cell membrane. Receptor for lutropin-choriogonadotropic hormone. The activity of this receptor is mediated by G proteins which activate adenylate cyclase. The chain is Lutropin-choriogonadotropic hormone receptor (Lhcgr) from Mus musculus (Mouse).